A 236-amino-acid polypeptide reads, in one-letter code: Pyridoxine 5'-phosphate synthase (236 aa).

Asn-7 is a binding site for 3-amino-2-oxopropyl phosphate. 9 to 10 is a 1-deoxy-D-xylulose 5-phosphate binding site; that stretch reads DH. 3-amino-2-oxopropyl phosphate is bound at residue Arg-18. His-43 acts as the Proton acceptor in catalysis. 1-deoxy-D-xylulose 5-phosphate contacts are provided by Arg-45 and His-50. Catalysis depends on Glu-69, which acts as the Proton acceptor. Thr-99 serves as a coordination point for 1-deoxy-D-xylulose 5-phosphate. His-190 (proton donor) is an active-site residue. 3-amino-2-oxopropyl phosphate contacts are provided by residues Gly-191 and 212 to 213; that span reads GH.

This sequence belongs to the PNP synthase family. Homooctamer; tetramer of dimers.

It is found in the cytoplasm. It catalyses the reaction 3-amino-2-oxopropyl phosphate + 1-deoxy-D-xylulose 5-phosphate = pyridoxine 5'-phosphate + phosphate + 2 H2O + H(+). It participates in cofactor biosynthesis; pyridoxine 5'-phosphate biosynthesis; pyridoxine 5'-phosphate from D-erythrose 4-phosphate: step 5/5. Its function is as follows. Catalyzes the complicated ring closure reaction between the two acyclic compounds 1-deoxy-D-xylulose-5-phosphate (DXP) and 3-amino-2-oxopropyl phosphate (1-amino-acetone-3-phosphate or AAP) to form pyridoxine 5'-phosphate (PNP) and inorganic phosphate. The sequence is that of Pyridoxine 5'-phosphate synthase from Desulfosudis oleivorans (strain DSM 6200 / JCM 39069 / Hxd3) (Desulfococcus oleovorans).